We begin with the raw amino-acid sequence, 272 residues long: Glutamate racemase (272 aa).

Substrate-binding positions include Asp10–Ser11 and Tyr42–Gly43. Cys73 acts as the Proton donor/acceptor in catalysis. Asn74–Thr75 serves as a coordination point for substrate. Cys183 serves as the catalytic Proton donor/acceptor. Residue Thr184–His185 participates in substrate binding.

It belongs to the aspartate/glutamate racemases family.

The catalysed reaction is L-glutamate = D-glutamate. It functions in the pathway cell wall biogenesis; peptidoglycan biosynthesis. Provides the (R)-glutamate required for cell wall biosynthesis. The chain is Glutamate racemase from Leifsonia xyli subsp. xyli (strain CTCB07).